Reading from the N-terminus, the 621-residue chain is DEAD-box ATP-dependent RNA helicase 39 (621 aa).

The Q motif motif lies at 112-140; that stretch reads ENFQELGLSEEVMGALQELNIEVPTEIQC. Residues 143 to 330 form the Helicase ATP-binding domain; the sequence is IPAVMERKSV…DEEFQGIEHL (188 aa). 156–163 contacts ATP; it reads SHTGSGKT. The DEAD box motif lies at 270 to 273; that stretch reads DEAD. In terms of domain architecture, Helicase C-terminal spans 355–505; sequence KLEALLQVLE…LESLTTDNVR (151 aa). A disordered region spans residues 497–621; that stretch reads ESLTTDNVRR…RGKSSSARAS (125 aa). Residues 503–537 show a composition bias toward basic and acidic residues; that stretch reads NVRRDAARTHITQEKGRSVKQIREVSKQRNSRDKP. Over residues 555–572 the composition is skewed to low complexity; it reads KSSSSSFSKPRKASSPPE.

This sequence belongs to the DEAD box helicase family.

It catalyses the reaction ATP + H2O = ADP + phosphate + H(+). The sequence is that of DEAD-box ATP-dependent RNA helicase 39 (RH39) from Arabidopsis thaliana (Mouse-ear cress).